Here is a 475-residue protein sequence, read N- to C-terminus: Ribulose bisphosphate carboxylase large chain (475 aa).

Positions 1–2 (MS) are excised as a propeptide. P3 bears the N-acetylproline mark. The residue at position 14 (K14) is an N6,N6,N6-trimethyllysine. The substrate site is built by N123 and T173. K175 acts as the Proton acceptor in catalysis. A substrate-binding site is contributed by K177. The Mg(2+) site is built by K201, D203, and E204. K201 bears the N6-carboxylysine mark. H294 serves as the catalytic Proton acceptor. Substrate-binding residues include R295, H327, and S379.

It belongs to the RuBisCO large chain family. Type I subfamily. Heterohexadecamer of 8 large chains and 8 small chains; disulfide-linked. The disulfide link is formed within the large subunit homodimers. Mg(2+) is required as a cofactor. The disulfide bond which can form in the large chain dimeric partners within the hexadecamer appears to be associated with oxidative stress and protein turnover.

The protein resides in the plastid. The protein localises to the chloroplast. It catalyses the reaction 2 (2R)-3-phosphoglycerate + 2 H(+) = D-ribulose 1,5-bisphosphate + CO2 + H2O. The enzyme catalyses D-ribulose 1,5-bisphosphate + O2 = 2-phosphoglycolate + (2R)-3-phosphoglycerate + 2 H(+). In terms of biological role, ruBisCO catalyzes two reactions: the carboxylation of D-ribulose 1,5-bisphosphate, the primary event in carbon dioxide fixation, as well as the oxidative fragmentation of the pentose substrate in the photorespiration process. Both reactions occur simultaneously and in competition at the same active site. This chain is Ribulose bisphosphate carboxylase large chain, found in Cedrus deodara (Deodar cedar).